The primary structure comprises 724 residues: Polyribonucleotide nucleotidyltransferase (724 aa).

The Mg(2+) site is built by aspartate 488 and aspartate 494. Residues 555–614 (PRMITVKINPEKIRDVIGKGGSTIQALTKETGCTIDIGEDGTITIASTSSEGMAEAKRRI) enclose the KH domain. The S1 motif domain occupies 624 to 692 (GKIYNGTVLK…EKGRMRLSIK (69 aa)). The tract at residues 697–724 (EEGDVPVAAPQAPGAGDAASQQQQQQQQ) is disordered. Low complexity predominate over residues 701 to 724 (VPVAAPQAPGAGDAASQQQQQQQQ).

Belongs to the polyribonucleotide nucleotidyltransferase family. Mg(2+) serves as cofactor.

It is found in the cytoplasm. It carries out the reaction RNA(n+1) + phosphate = RNA(n) + a ribonucleoside 5'-diphosphate. Its function is as follows. Involved in mRNA degradation. Catalyzes the phosphorolysis of single-stranded polyribonucleotides processively in the 3'- to 5'-direction. The protein is Polyribonucleotide nucleotidyltransferase of Ralstonia pickettii (strain 12J).